Consider the following 563-residue polypeptide: Secreted lipase ARB07186/07185 (563 aa).

The N-terminal stretch at 1-20 is a signal peptide; sequence MAKYDFVMLWILTLTAAIAA. C83 and C101 are oxidised to a cystine. Residue S215 is the Acyl-ester intermediate of the active site. C268 and C281 form a disulfide bridge.

Belongs to the type-B carboxylesterase/lipase family.

The protein resides in the secreted. It catalyses the reaction a triacylglycerol + H2O = a diacylglycerol + a fatty acid + H(+). The polypeptide is Secreted lipase ARB07186/07185 (Arthroderma benhamiae (strain ATCC MYA-4681 / CBS 112371) (Trichophyton mentagrophytes)).